Consider the following 347-residue polypeptide: Probable dual-specificity RNA methyltransferase RlmN (347 aa).

The active-site Proton acceptor is glutamate 94. The 235-residue stretch at 100 to 334 folds into the Radical SAM core domain; sequence TETRTTACVS…AKVRHSRGKD (235 aa). The cysteines at positions 107 and 339 are disulfide-linked. 3 residues coordinate [4Fe-4S] cluster: cysteine 114, cysteine 118, and cysteine 121. S-adenosyl-L-methionine-binding positions include 165–166, serine 197, 220–222, and asparagine 296; these read GE and SLH. Cysteine 339 functions as the S-methylcysteine intermediate in the catalytic mechanism.

This sequence belongs to the radical SAM superfamily. RlmN family. [4Fe-4S] cluster serves as cofactor.

The protein resides in the cytoplasm. The enzyme catalyses adenosine(2503) in 23S rRNA + 2 reduced [2Fe-2S]-[ferredoxin] + 2 S-adenosyl-L-methionine = 2-methyladenosine(2503) in 23S rRNA + 5'-deoxyadenosine + L-methionine + 2 oxidized [2Fe-2S]-[ferredoxin] + S-adenosyl-L-homocysteine. The catalysed reaction is adenosine(37) in tRNA + 2 reduced [2Fe-2S]-[ferredoxin] + 2 S-adenosyl-L-methionine = 2-methyladenosine(37) in tRNA + 5'-deoxyadenosine + L-methionine + 2 oxidized [2Fe-2S]-[ferredoxin] + S-adenosyl-L-homocysteine. Specifically methylates position 2 of adenine 2503 in 23S rRNA and position 2 of adenine 37 in tRNAs. The polypeptide is Probable dual-specificity RNA methyltransferase RlmN (Flavobacterium psychrophilum (strain ATCC 49511 / DSM 21280 / CIP 103535 / JIP02/86)).